A 329-amino-acid chain; its full sequence is MFIPVTNICRNRCGYCGFRREPGQPGARLMKPAEVISILKNGVRAGCTEVLFTFGEYAEEMPGYNLMLDEIGYSSTLDYLLFLCETAIETGILPHTNAGVMTRSELEALKPLNASMGLMLESTASLEAHKDCPGKIPERRLETIREAGKLQIPYTSGLLIGIGESREDRIESLEAITSLHREYGHIQEVIIQNFAPKPGTPMESFPEPTVEEMMDAVVLARHVLPSDVSVQVAPNLIDPKALIGKGVTDLGGISPLTIDWINPEAEWPDVRDLQKKLGDIPLRERLPVYPQYVKRGWYSERIGSLIERLSDNEGYRKQPAIENAEDLEK.

The 235-residue stretch at 1-235 (MFIPVTNICR…SDVSVQVAPN (235 aa)) folds into the Radical SAM core domain. [4Fe-4S] cluster contacts are provided by cysteine 9, cysteine 13, and cysteine 16.

Belongs to the radical SAM superfamily. CofG family. Consists of two subunits, CofG and CofH. It depends on [4Fe-4S] cluster as a cofactor.

It carries out the reaction 5-amino-5-(4-hydroxybenzyl)-6-(D-ribitylimino)-5,6-dihydrouracil + S-adenosyl-L-methionine = 7,8-didemethyl-8-hydroxy-5-deazariboflavin + 5'-deoxyadenosine + L-methionine + NH4(+) + H(+). It participates in cofactor biosynthesis; coenzyme F0 biosynthesis. Its function is as follows. Catalyzes the radical-mediated synthesis of 7,8-didemethyl-8-hydroxy-5-deazariboflavin from 5-amino-5-(4-hydroxybenzyl)-6-(D-ribitylimino)-5,6-dihydrouracil. This Methanosarcina acetivorans (strain ATCC 35395 / DSM 2834 / JCM 12185 / C2A) protein is 7,8-didemethyl-8-hydroxy-5-deazariboflavin synthase.